The chain runs to 1605 residues: Pentafunctional AROM polypeptide (1605 aa).

The 3-dehydroquinate synthase stretch occupies residues 1–384 (MTGPTKISIL…YEPRASVVPN (384 aa)). Residues 44-46 (DTN), 81-84 (EVSK), 114-116 (GGV), and Asp119 contribute to the NAD(+) site. Arg130 lines the 7-phospho-2-dehydro-3-deoxy-D-arabino-heptonate pocket. NAD(+) is bound at residue 139–140 (TT). Residues Asp146 and Lys152 each coordinate 7-phospho-2-dehydro-3-deoxy-D-arabino-heptonate. Lys161 is an NAD(+) binding site. Residue Asn162 coordinates 7-phospho-2-dehydro-3-deoxy-D-arabino-heptonate. NAD(+)-binding positions include 179–182 (FLET) and Asn190. Glu194 provides a ligand contact to Zn(2+). 7-phospho-2-dehydro-3-deoxy-D-arabino-heptonate is bound by residues 194-197 (EVIK) and Lys250. The active-site Proton acceptor; for 3-dehydroquinate synthase activity is Glu260. Residues 264 to 268 (RNLLN) and His271 each bind 7-phospho-2-dehydro-3-deoxy-D-arabino-heptonate. His271 provides a ligand contact to Zn(2+). His275 serves as the catalytic Proton acceptor; for 3-dehydroquinate synthase activity. 2 residues coordinate 7-phospho-2-dehydro-3-deoxy-D-arabino-heptonate: His287 and Lys356. Position 287 (His287) interacts with Zn(2+). Residues 397–842 (VHPGVSTTSE…WDTLRQKFAV (446 aa)) are EPSP synthase. Cys824 acts as the For EPSP synthase activity in catalysis. A shikimate kinase region spans residues 864-1055 (SASVFIIGMR…KKKQHSFFVS (192 aa)). 871 to 878 (GMRGAGKT) provides a ligand contact to ATP. Positions 1056-1276 (LTLPDVRGAD…AAPGQLSATD (221 aa)) are 3-dehydroquinase. Residue His1179 is the Proton acceptor; for 3-dehydroquinate dehydratase activity of the active site. Lys1207 functions as the Schiff-base intermediate with substrate; for 3-dehydroquinate dehydratase activity in the catalytic mechanism. The shikimate dehydrogenase stretch occupies residues 1289–1605 (KKRFALFGSP…LSGRTMLTCS (317 aa)).

This sequence in the N-terminal section; belongs to the sugar phosphate cyclases superfamily. Dehydroquinate synthase family. In the 2nd section; belongs to the EPSP synthase family. The protein in the 3rd section; belongs to the shikimate kinase family. It in the 4th section; belongs to the type-I 3-dehydroquinase family. This sequence in the C-terminal section; belongs to the shikimate dehydrogenase family. In terms of assembly, homodimer. Requires Zn(2+) as cofactor.

Its subcellular location is the cytoplasm. It carries out the reaction 7-phospho-2-dehydro-3-deoxy-D-arabino-heptonate = 3-dehydroquinate + phosphate. It catalyses the reaction 3-dehydroquinate = 3-dehydroshikimate + H2O. The catalysed reaction is shikimate + NADP(+) = 3-dehydroshikimate + NADPH + H(+). The enzyme catalyses shikimate + ATP = 3-phosphoshikimate + ADP + H(+). It carries out the reaction 3-phosphoshikimate + phosphoenolpyruvate = 5-O-(1-carboxyvinyl)-3-phosphoshikimate + phosphate. The protein operates within metabolic intermediate biosynthesis; chorismate biosynthesis; chorismate from D-erythrose 4-phosphate and phosphoenolpyruvate: step 2/7. It participates in metabolic intermediate biosynthesis; chorismate biosynthesis; chorismate from D-erythrose 4-phosphate and phosphoenolpyruvate: step 3/7. Its pathway is metabolic intermediate biosynthesis; chorismate biosynthesis; chorismate from D-erythrose 4-phosphate and phosphoenolpyruvate: step 4/7. It functions in the pathway metabolic intermediate biosynthesis; chorismate biosynthesis; chorismate from D-erythrose 4-phosphate and phosphoenolpyruvate: step 5/7. The protein operates within metabolic intermediate biosynthesis; chorismate biosynthesis; chorismate from D-erythrose 4-phosphate and phosphoenolpyruvate: step 6/7. The AROM polypeptide catalyzes 5 consecutive enzymatic reactions in prechorismate polyaromatic amino acid biosynthesis. This chain is Pentafunctional AROM polypeptide, found in Aspergillus fumigatus (strain CBS 144.89 / FGSC A1163 / CEA10) (Neosartorya fumigata).